Here is a 580-residue protein sequence, read N- to C-terminus: 2-hydroxyacyl-CoA lyase 1 (580 aa).

Residue glutamate 47 coordinates thiamine diphosphate. The interval 413–494 is thiamine pyrophosphate binding; it reads TMDIGRLCIP…FIVLNNNGVY (82 aa). Residues aspartate 463 and asparagine 490 each contribute to the Mg(2+) site.

This sequence belongs to the TPP enzyme family. Homotetramer. Mg(2+) is required as a cofactor. Requires thiamine diphosphate as cofactor.

It is found in the peroxisome. It carries out the reaction a 2-hydroxy-3-methyl fatty acyl-CoA = a 2-methyl-branched fatty aldehyde + formyl-CoA. It catalyses the reaction an (R)-2-hydroxy-long-chain-fatty acyl-CoA = a long-chain fatty aldehyde + formyl-CoA. The enzyme catalyses 2-hydroxy-3-methylhexadecanoyl-CoA = 2-methylpentadecanal + formyl-CoA. The catalysed reaction is 2-hydroxyoctadecanoyl-CoA = heptadecanal + formyl-CoA. In terms of biological role, peroxisomal 2-OH acyl-CoA lyase involved in the cleavage (C1 removal) reaction in the fatty acid alpha-oxydation in a thiamine pyrophosphate (TPP)-dependent manner. Involved in the degradation of 3-methyl-branched fatty acids and the shortening of 2-hydroxy long-chain fatty acids. This Dictyostelium discoideum (Social amoeba) protein is 2-hydroxyacyl-CoA lyase 1 (hacl1).